The primary structure comprises 248 residues: Deoxyribose-phosphate aldolase (248 aa).

Residue D117 is the Proton donor/acceptor of the active site. K179 functions as the Schiff-base intermediate with acetaldehyde in the catalytic mechanism. K208 functions as the Proton donor/acceptor in the catalytic mechanism.

Belongs to the DeoC/FbaB aldolase family. DeoC type 1 subfamily.

The protein localises to the cytoplasm. The catalysed reaction is 2-deoxy-D-ribose 5-phosphate = D-glyceraldehyde 3-phosphate + acetaldehyde. It functions in the pathway carbohydrate degradation; 2-deoxy-D-ribose 1-phosphate degradation; D-glyceraldehyde 3-phosphate and acetaldehyde from 2-deoxy-alpha-D-ribose 1-phosphate: step 2/2. Catalyzes a reversible aldol reaction between acetaldehyde and D-glyceraldehyde 3-phosphate to generate 2-deoxy-D-ribose 5-phosphate. In Thermotoga petrophila (strain ATCC BAA-488 / DSM 13995 / JCM 10881 / RKU-1), this protein is Deoxyribose-phosphate aldolase.